The sequence spans 538 residues: Eukaryotic translation initiation factor 3 subunit L (538 aa).

A PCI domain is found at 305-513 (TFSDILLYIQ…IHIADTKVSH (209 aa)).

Belongs to the eIF-3 subunit L family. In terms of assembly, component of the eukaryotic translation initiation factor 3 (eIF-3) complex. The eIF-3 complex interacts with pix.

It is found in the cytoplasm. In terms of biological role, component of the eukaryotic translation initiation factor 3 (eIF-3) complex, which is involved in protein synthesis of a specialized repertoire of mRNAs and, together with other initiation factors, stimulates binding of mRNA and methionyl-tRNAi to the 40S ribosome. The eIF-3 complex specifically targets and initiates translation of a subset of mRNAs involved in cell proliferation. This Drosophila virilis (Fruit fly) protein is Eukaryotic translation initiation factor 3 subunit L.